The chain runs to 174 residues: Ribosome maturation factor RimP (174 aa).

The protein belongs to the RimP family.

It is found in the cytoplasm. In terms of biological role, required for maturation of 30S ribosomal subunits. This is Ribosome maturation factor RimP from Acinetobacter baumannii (strain SDF).